Reading from the N-terminus, the 444-residue chain is ATP-dependent protease ATPase subunit HslU (444 aa).

Residues Ile-18 and 60–65 (GVGKTE) each bind ATP. Residues 143–163 (WGEVESHDSHSSTRQAFRKKL) are disordered. Asp-257, Glu-322, and Arg-394 together coordinate ATP.

Belongs to the ClpX chaperone family. HslU subfamily. As to quaternary structure, a double ring-shaped homohexamer of HslV is capped on each side by a ring-shaped HslU homohexamer. The assembly of the HslU/HslV complex is dependent on binding of ATP.

Its subcellular location is the cytoplasm. ATPase subunit of a proteasome-like degradation complex; this subunit has chaperone activity. The binding of ATP and its subsequent hydrolysis by HslU are essential for unfolding of protein substrates subsequently hydrolyzed by HslV. HslU recognizes the N-terminal part of its protein substrates and unfolds these before they are guided to HslV for hydrolysis. The polypeptide is ATP-dependent protease ATPase subunit HslU (Haemophilus influenzae (strain PittEE)).